The following is a 338-amino-acid chain: Malate dehydrogenase, mitochondrial (338 aa).

The N-terminal 24 residues, 1–24 (MLSALARPAGAALRRSFSTSAQNN), are a transit peptide targeting the mitochondrion. NAD(+) is bound by residues 31-37 (GASGGIG) and D57. O-linked (GlcNAc) serine glycosylation occurs at S33. N6-acetyllysine; alternate occurs at positions 78 and 91. N6-succinyllysine; alternate occurs at positions 78 and 91. Positions 104 and 110 each coordinate substrate. NAD(+) contacts are provided by residues N117 and 140 to 142 (ISN). Position 142 (N142) interacts with substrate. K165 carries the post-translational modification N6-acetyllysine. R176 is a binding site for substrate. The residue at position 185 (K185) is an N6-acetyllysine; alternate. K185 is modified (N6-succinyllysine; alternate). H200 acts as the Proton acceptor in catalysis. K203 carries the post-translational modification N6-succinyllysine. N6-acetyllysine; alternate is present on residues K215 and K239. 2 positions are modified to N6-succinyllysine; alternate: K215 and K239. K239 carries the N6-malonyllysine; alternate modification. S246 carries the phosphoserine modification. M251 is an NAD(+) binding site. K269 is subject to N6-succinyllysine. K296, K301, K307, K314, and K324 each carry N6-acetyllysine; alternate. N6-succinyllysine; alternate occurs at positions 296, 301, 307, 314, and 324. K307 bears the N6-malonyllysine; alternate mark. S326 carries the post-translational modification Phosphoserine. K328, K329, and K335 each carry N6-acetyllysine; alternate. The residue at position 328 (K328) is an N6-succinyllysine; alternate. K329 carries the post-translational modification N6-malonyllysine; alternate. K335 bears the N6-succinyllysine; alternate mark.

This sequence belongs to the LDH/MDH superfamily. MDH type 1 family. Homodimer. In terms of processing, acetylation is enhanced after treatment either with trichostin A (TCA) or with nicotinamide (NAM) with the appearance of tri- and tetraacetylations. Glucose also increases acetylation.

The protein resides in the mitochondrion matrix. It catalyses the reaction (S)-malate + NAD(+) = oxaloacetate + NADH + H(+). Its activity is regulated as follows. Enzyme activity is enhanced by acetylation. The polypeptide is Malate dehydrogenase, mitochondrial (MDH2) (Bos taurus (Bovine)).